The sequence spans 414 residues: 2,3-diketo-5-methylthiopentyl-1-phosphate enolase (414 aa).

The active-site Proton acceptor is Lys-99. Substrate is bound by residues Lys-148, 174–177 (KDDE), His-265, Gly-338, and 360–361 (GG). The Mg(2+) site is built by Lys-174, Asp-176, and Glu-177. Lys-174 bears the N6-carboxylysine mark.

Belongs to the RuBisCO large chain family. Type IV subfamily. Homodimer. It depends on Mg(2+) as a cofactor.

The catalysed reaction is 5-methylsulfanyl-2,3-dioxopentyl phosphate = 2-hydroxy-5-methylsulfanyl-3-oxopent-1-enyl phosphate. It functions in the pathway amino-acid biosynthesis; L-methionine biosynthesis via salvage pathway; L-methionine from S-methyl-5-thio-alpha-D-ribose 1-phosphate: step 3/6. Functionally, catalyzes the enolization of 2,3-diketo-5-methylthiopentyl-1-phosphate (DK-MTP-1-P) into 2-hydroxy-3-keto-5-methylthiopentenyl-1-phosphate (HK-MTPenyl-1-P). In Bacillus cereus (strain ATCC 10987 / NRS 248), this protein is 2,3-diketo-5-methylthiopentyl-1-phosphate enolase.